We begin with the raw amino-acid sequence, 302 residues long: tRNA dimethylallyltransferase (302 aa).

Residue 9 to 16 (GPTGSGKT) participates in ATP binding. Residue 11–16 (TGSGKT) coordinates substrate.

This sequence belongs to the IPP transferase family. As to quaternary structure, monomer. Mg(2+) serves as cofactor.

It catalyses the reaction adenosine(37) in tRNA + dimethylallyl diphosphate = N(6)-dimethylallyladenosine(37) in tRNA + diphosphate. Functionally, catalyzes the transfer of a dimethylallyl group onto the adenine at position 37 in tRNAs that read codons beginning with uridine, leading to the formation of N6-(dimethylallyl)adenosine (i(6)A). The polypeptide is tRNA dimethylallyltransferase (Thermus thermophilus (strain ATCC BAA-163 / DSM 7039 / HB27)).